The chain runs to 706 residues: Elongation factor G (706 aa).

Residues 8–295 form the tr-type G domain; it reads ERYRNFGIMA…AVIDYLPSPL (288 aa). GTP contacts are provided by residues 17–24, 92–96, and 146–149; these read AHIDAGKT, DTPGH, and NKMD.

Belongs to the TRAFAC class translation factor GTPase superfamily. Classic translation factor GTPase family. EF-G/EF-2 subfamily.

Its subcellular location is the cytoplasm. Its function is as follows. Catalyzes the GTP-dependent ribosomal translocation step during translation elongation. During this step, the ribosome changes from the pre-translocational (PRE) to the post-translocational (POST) state as the newly formed A-site-bound peptidyl-tRNA and P-site-bound deacylated tRNA move to the P and E sites, respectively. Catalyzes the coordinated movement of the two tRNA molecules, the mRNA and conformational changes in the ribosome. The protein is Elongation factor G of Jannaschia sp. (strain CCS1).